A 722-amino-acid polypeptide reads, in one-letter code: NCK-interacting protein with SH3 domain (722 aa).

Positions 1 to 58 (MYRALYAFRSAEPNALAFAAGETFLVLERSSAHWWLAARARSGETGYVPPAYLRRLQG) constitute an SH3 domain. Disordered regions lie at residues 101–122 (KETLSRRGPSASSVAVMTSSTS) and 149–286 (PSSE…ASDD). Residues 110–121 (SASSVAVMTSST) show a composition bias toward low complexity. Position 120 is a phosphoserine (Ser-120). Over residues 169–185 (QIPPQPRRAAPTTPPPP) the composition is skewed to pro residues. Positions 175 to 192 (RRAAPTTPPPPVKRRDRE) match the Nuclear localization signal motif. Thr-181 bears the Phosphothreonine mark. Positions 206 to 240 (PSGGNSVSSGSSVSSTSLDTLYTSSSPSEPGSSCS) are enriched in low complexity. Ser-294 carries the post-translational modification Phosphoserine.

As to quaternary structure, associates with the intermediate filaments, vimentin and desmin. Binds the first and third SH3 domains of NCK. Binds the proline-rich domains of N-WASP through its SH3 domain. Similarly, binds diaphanous protein homolog 1 (DRF1). Binds the SH3 domains of GRB2 through its proline-rich domains. Interacts with Helicobacter pylori toxin vacA. Isoform 4 interacts with FHOD1. Interacts with FASLG. Interacts with TMIGD2. Highest expression in heart, brain, skeletal muscle, kidney and liver. Lower levels in placenta, lung, small intestine and leukocytes. Weak expression in colon, thymus and spleen.

The protein resides in the nucleus. Its function is as follows. Has an important role in stress fiber formation induced by active diaphanous protein homolog 1 (DRF1). Induces microspike formation, in vivo. In vitro, stimulates N-WASP-induced ARP2/3 complex activation in the absence of CDC42. May play an important role in the maintenance of sarcomeres and/or in the assembly of myofibrils into sarcomeres. Implicated in regulation of actin polymerization and cell adhesion. Plays a role in angiogenesis. The sequence is that of NCK-interacting protein with SH3 domain (NCKIPSD) from Homo sapiens (Human).